Here is a 162-residue protein sequence, read N- to C-terminus: Crossover junction endodeoxyribonuclease RuvC (162 aa).

Active-site residues include aspartate 7, glutamate 67, and aspartate 140. Mg(2+)-binding residues include aspartate 7, glutamate 67, and aspartate 140.

Belongs to the RuvC family. As to quaternary structure, homodimer which binds Holliday junction (HJ) DNA. The HJ becomes 2-fold symmetrical on binding to RuvC with unstacked arms; it has a different conformation from HJ DNA in complex with RuvA. In the full resolvosome a probable DNA-RuvA(4)-RuvB(12)-RuvC(2) complex forms which resolves the HJ. The cofactor is Mg(2+).

The protein resides in the cytoplasm. It catalyses the reaction Endonucleolytic cleavage at a junction such as a reciprocal single-stranded crossover between two homologous DNA duplexes (Holliday junction).. Functionally, the RuvA-RuvB-RuvC complex processes Holliday junction (HJ) DNA during genetic recombination and DNA repair. Endonuclease that resolves HJ intermediates. Cleaves cruciform DNA by making single-stranded nicks across the HJ at symmetrical positions within the homologous arms, yielding a 5'-phosphate and a 3'-hydroxyl group; requires a central core of homology in the junction. The consensus cleavage sequence is 5'-(A/T)TT(C/G)-3'. Cleavage occurs on the 3'-side of the TT dinucleotide at the point of strand exchange. HJ branch migration catalyzed by RuvA-RuvB allows RuvC to scan DNA until it finds its consensus sequence, where it cleaves and resolves the cruciform DNA. The polypeptide is Crossover junction endodeoxyribonuclease RuvC (Pseudothermotoga lettingae (strain ATCC BAA-301 / DSM 14385 / NBRC 107922 / TMO) (Thermotoga lettingae)).